Here is a 96-residue protein sequence, read N- to C-terminus: Dynein light chain roadblock-type 2 (96 aa).

Position 2 is an N-acetylalanine (A2).

It belongs to the GAMAD family. Homodimer. The cytoplasmic dynein 1 complex consists of two catalytic heavy chains (HCs) and a number of non-catalytic subunits presented by intermediate chains (ICs), light intermediate chains (LICs) and light chains (LCs); the composition seems to vary in respect to the IC, LIC and LC composition. The heavy chain homodimer serves as a scaffold for the probable homodimeric assembly of the respective non-catalytic subunits. The ICs and LICs bind directly to the HC dimer and the LCs assemble on the IC dimer. Interacts with DYNC1I1 and DYNC1I2. Self-associates. Interacts with DYNLRB1.

It is found in the cytoplasm. The protein resides in the cytoskeleton. Its function is as follows. Acts as one of several non-catalytic accessory components of the cytoplasmic dynein 1 complex that are thought to be involved in linking dynein to cargos and to adapter proteins that regulate dynein function. Cytoplasmic dynein 1 acts as a motor for the intracellular retrograde motility of vesicles and organelles along microtubules. The protein is Dynein light chain roadblock-type 2 (DYNLRB2) of Bos taurus (Bovine).